The chain runs to 249 residues: tRNA (guanine-N(1)-)-methyltransferase (249 aa).

S-adenosyl-L-methionine-binding positions include glycine 117 and 137-142 (LGDFVL).

The protein belongs to the RNA methyltransferase TrmD family. As to quaternary structure, homodimer.

It is found in the cytoplasm. It carries out the reaction guanosine(37) in tRNA + S-adenosyl-L-methionine = N(1)-methylguanosine(37) in tRNA + S-adenosyl-L-homocysteine + H(+). In terms of biological role, specifically methylates guanosine-37 in various tRNAs. This chain is tRNA (guanine-N(1)-)-methyltransferase, found in Janthinobacterium sp. (strain Marseille) (Minibacterium massiliensis).